A 1434-amino-acid chain; its full sequence is DNA-directed RNA polymerase subunit beta' (1434 aa).

Zn(2+) contacts are provided by Cys70, Cys72, Cys85, and Cys88. Mg(2+) contacts are provided by Asp460, Asp462, and Asp464. 4 residues coordinate Zn(2+): Cys840, Cys914, Cys921, and Cys924.

Belongs to the RNA polymerase beta' chain family. The RNAP catalytic core consists of 2 alpha, 1 beta, 1 beta' and 1 omega subunit. When a sigma factor is associated with the core the holoenzyme is formed, which can initiate transcription. Mg(2+) is required as a cofactor. It depends on Zn(2+) as a cofactor.

It carries out the reaction RNA(n) + a ribonucleoside 5'-triphosphate = RNA(n+1) + diphosphate. In terms of biological role, DNA-dependent RNA polymerase catalyzes the transcription of DNA into RNA using the four ribonucleoside triphosphates as substrates. This is DNA-directed RNA polymerase subunit beta' from Tolumonas auensis (strain DSM 9187 / NBRC 110442 / TA 4).